The primary structure comprises 335 residues: Protein-arginine N-acetylglucosaminyltransferase SseK3 (335 aa).

UDP-N-acetyl-alpha-D-glucosamine contacts are provided by residues 51-53 (QWF) and Tyr-75. Arg-153 and Arg-184 each carry an N-beta-linked (GlcNAc) arginine; by autocatalysis glycan. 224-227 (YLDA) contacts UDP-N-acetyl-alpha-D-glucosamine. Positions 226-228 (DAD) match the DXD motif motif. A Mn(2+)-binding site is contributed by Asp-228. Glu-258 functions as the Proton acceptor in the catalytic mechanism. N-beta-linked (GlcNAc) arginine; by autocatalysis glycosylation is present at Arg-305. Positions 325 and 327 each coordinate Mn(2+). UDP-N-acetyl-alpha-D-glucosamine contacts are provided by residues Ser-327 and 332–335 (SSWR). A glycan (N-beta-linked (GlcNAc) arginine; by autocatalysis) is linked at Arg-335.

The protein belongs to the glycosyltransferase NleB family. In terms of assembly, interacts with host TRIM32; without mediating its GlcNAcylation. Mn(2+) is required as a cofactor. In terms of processing, auto-glycosylated: arginine GlcNAcylation is required for activity toward death domain-containing host target proteins.

The protein resides in the secreted. Its subcellular location is the host Golgi apparatus. It carries out the reaction L-arginyl-[protein] + UDP-N-acetyl-alpha-D-glucosamine = N(omega)-(N-acetyl-beta-D-glucosaminyl)-L-arginyl-[protein] + UDP + H(+). Protein-arginine N-acetylglucosaminyltransferase effector that disrupts TNF signaling in infected cells, including NF-kappa-B signaling and apoptosis. Acts by catalyzing the transfer of a single N-acetylglucosamine (GlcNAc) to a conserved arginine residue in the death domain of host proteins such as TRADD, TNFRSF1A/TNFR1 and TNFRSF10B/TRAILR2: arginine GlcNAcylation prevents homotypic/heterotypic death domain interactions and assembly of the oligomeric TNF-alpha receptor complex, thereby disrupting TNF signaling. Also acts on host proteins without a death domain: catalyzes arginine GlcNAcylation of host small Rab GTPase (Rab1, Rab5 and Rab11), thereby preventing GTPase activity and leading to impaired host vesicular protein transport. Also mediates auto-GlcNAcylation, which is required for activity toward death domain-containing host target proteins. The sequence is that of Protein-arginine N-acetylglucosaminyltransferase SseK3 from Salmonella typhimurium (strain SL1344).